Here is a 464-residue protein sequence, read N- to C-terminus: Signal recognition particle 54 kDa protein (464 aa).

GTP-binding positions include 104–111, 184–188, and 242–245; these read GLQGSGKT, DTAGR, and TKLD.

It belongs to the GTP-binding SRP family. SRP54 subfamily. As to quaternary structure, part of the signal recognition particle protein translocation system, which is composed of SRP and FtsY. Archaeal SRP consists of a 7S RNA molecule of 300 nucleotides and two protein subunits: SRP54 and SRP19.

It localises to the cytoplasm. The catalysed reaction is GTP + H2O = GDP + phosphate + H(+). Functionally, involved in targeting and insertion of nascent membrane proteins into the cytoplasmic membrane. Binds to the hydrophobic signal sequence of the ribosome-nascent chain (RNC) as it emerges from the ribosomes. The SRP-RNC complex is then targeted to the cytoplasmic membrane where it interacts with the SRP receptor FtsY. This Halorubrum lacusprofundi (strain ATCC 49239 / DSM 5036 / JCM 8891 / ACAM 34) protein is Signal recognition particle 54 kDa protein.